The sequence spans 348 residues: Uroporphyrinogen decarboxylase (348 aa).

Substrate-binding positions include 27–31 (RQAGR), Phe-46, Asp-76, Tyr-152, Ser-207, and His-320.

This sequence belongs to the uroporphyrinogen decarboxylase family. Homodimer.

It localises to the cytoplasm. It carries out the reaction uroporphyrinogen III + 4 H(+) = coproporphyrinogen III + 4 CO2. It participates in porphyrin-containing compound metabolism; protoporphyrin-IX biosynthesis; coproporphyrinogen-III from 5-aminolevulinate: step 4/4. In terms of biological role, catalyzes the decarboxylation of four acetate groups of uroporphyrinogen-III to yield coproporphyrinogen-III. The sequence is that of Uroporphyrinogen decarboxylase from Bacillus mycoides (strain KBAB4) (Bacillus weihenstephanensis).